We begin with the raw amino-acid sequence, 590 residues long: Aspartate--tRNA(Asp/Asn) ligase (590 aa).

Glu-173 serves as a coordination point for L-aspartate. An aspartate region spans residues 197–200 (QIFK). Arg-219 provides a ligand contact to L-aspartate. ATP is bound by residues 219 to 221 (RDE) and Gln-228. Position 450 (His-450) interacts with L-aspartate. Residue Glu-484 participates in ATP binding. Arg-491 lines the L-aspartate pocket. Position 536-539 (536-539 (GLDR)) interacts with ATP.

The protein belongs to the class-II aminoacyl-tRNA synthetase family. Type 1 subfamily. Homodimer.

It is found in the cytoplasm. The catalysed reaction is tRNA(Asx) + L-aspartate + ATP = L-aspartyl-tRNA(Asx) + AMP + diphosphate. Aspartyl-tRNA synthetase with relaxed tRNA specificity since it is able to aspartylate not only its cognate tRNA(Asp) but also tRNA(Asn). Reaction proceeds in two steps: L-aspartate is first activated by ATP to form Asp-AMP and then transferred to the acceptor end of tRNA(Asp/Asn). The sequence is that of Aspartate--tRNA(Asp/Asn) ligase from Coxiella burnetii (strain Dugway 5J108-111).